We begin with the raw amino-acid sequence, 393 residues long: Riboflavin biosynthesis protein RibBA (393 aa).

The tract at residues 1–200 (MEFDEIKDAL…IESLVNYQKD (200 aa)) is DHBP synthase. D-ribulose 5-phosphate is bound by residues 27–28 (RE), D32, 139–143 (RTGHT), and E163. Residue E28 coordinates Mg(2+). Position 142 (H142) interacts with Mg(2+). Residues 201–393 (KDTSVELKAK…TKKIKMGHLI (193 aa)) form a GTP cyclohydrolase II region. 249-253 (RIHSA) serves as a coordination point for GTP. The Zn(2+) site is built by C254, C265, and C267. Residues Q270, 291–293 (EGR), and T313 contribute to the GTP site. D325 functions as the Proton acceptor; for GTP cyclohydrolase activity in the catalytic mechanism. Residue R327 is the Nucleophile; for GTP cyclohydrolase activity of the active site. Residues S348 and K353 each contribute to the GTP site.

It in the N-terminal section; belongs to the DHBP synthase family. This sequence in the C-terminal section; belongs to the GTP cyclohydrolase II family. The cofactor is Mg(2+). Requires Mn(2+) as cofactor. Zn(2+) is required as a cofactor.

The enzyme catalyses D-ribulose 5-phosphate = (2S)-2-hydroxy-3-oxobutyl phosphate + formate + H(+). It catalyses the reaction GTP + 4 H2O = 2,5-diamino-6-hydroxy-4-(5-phosphoribosylamino)-pyrimidine + formate + 2 phosphate + 3 H(+). The protein operates within cofactor biosynthesis; riboflavin biosynthesis; 2-hydroxy-3-oxobutyl phosphate from D-ribulose 5-phosphate: step 1/1. It participates in cofactor biosynthesis; riboflavin biosynthesis; 5-amino-6-(D-ribitylamino)uracil from GTP: step 1/4. Functionally, catalyzes the conversion of D-ribulose 5-phosphate to formate and 3,4-dihydroxy-2-butanone 4-phosphate. In terms of biological role, catalyzes the conversion of GTP to 2,5-diamino-6-ribosylamino-4(3H)-pyrimidinone 5'-phosphate (DARP), formate and pyrophosphate. This chain is Riboflavin biosynthesis protein RibBA, found in Staphylococcus haemolyticus (strain JCSC1435).